A 648-amino-acid polypeptide reads, in one-letter code: Mitotic interactor and substrate of PLK1 (648 aa).

Serine 77 carries the post-translational modification Phosphoserine; by CDK1. Phosphothreonine is present on residues threonine 149 and threonine 190. Position 220 is a phosphoserine (serine 220). 2 disordered regions span residues 242–383 (VNDP…PEAR) and 430–460 (KATE…GKAT). Serine 253 bears the Phosphoserine; by CDK1 mark. Basic and acidic residues predominate over residues 255 to 281 (ETPKETPIEREIRLAQEREAELREQRG). A Phosphothreonine; by CDK1 modification is found at threonine 256. A Phosphoserine modification is found at serine 318. Basic and acidic residues predominate over residues 325-339 (MVQETQREEDHRREG). The residue at position 347 (threonine 347) is a Phosphothreonine; by CDK1. Positions 349-367 (DWPSQDPQPGLQRSLSSDC) are enriched in polar residues. Serine 352 and serine 364 each carry phosphoserine. Residues serine 365 and serine 439 each carry the phosphoserine; by PLK1 modification. Polar residues predominate over residues 440–450 (ESSGRSLSSKQ). Phosphoserine occurs at positions 507 and 509. Residues 511-534 (DLLEREMESVLRREREVAEERRNA) adopt a coiled-coil conformation. Residues 539–568 (VFSPVPAEDESHEQDSRSSSRASGITGSYS) are disordered. Serine 541 carries the phosphoserine; by CDK1 modification. Serine 554 carries the post-translational modification Phosphoserine; by PLK1. Residues 557 to 568 (SSRASGITGSYS) show a composition bias toward polar residues. Serine 644 bears the Phosphoserine mark.

It belongs to the MISP family. As to quaternary structure, associates with F-actin. Interacts with DCTN1; this interaction regulates DCTN1 distribution at the cell cortex. Interacts with PTK2/FAK and MAPRE1. Phosphorylated by CDK1 and PLK1. CDK1 is the priming kinase for PLK1 phosphorylation. Phosphorylation by PLK1 is required for proper spindle orientation at metaphase.

It is found in the cell junction. The protein localises to the focal adhesion. The protein resides in the cytoplasm. It localises to the cytoskeleton. Its subcellular location is the cell cortex. In terms of biological role, plays a role in mitotic spindle orientation and mitotic progression. Regulates the distribution of dynactin at the cell cortex in a PLK1-dependent manner, thus stabilizing cortical and astral microtubule attachments required for proper mitotic spindle positioning. May link microtubules to the actin cytoskeleton and focal adhesions. May be required for directed cell migration and centrosome orientation. May also be necessary for proper stacking of the Golgi apparatus. The polypeptide is Mitotic interactor and substrate of PLK1 (Mus musculus (Mouse)).